The chain runs to 305 residues: Acetylglutamate kinase (305 aa).

Residues 67 to 68 (GG), Arg-89, and Asn-190 contribute to the substrate site.

Belongs to the acetylglutamate kinase family. ArgB subfamily.

It localises to the cytoplasm. It carries out the reaction N-acetyl-L-glutamate + ATP = N-acetyl-L-glutamyl 5-phosphate + ADP. The protein operates within amino-acid biosynthesis; L-arginine biosynthesis; N(2)-acetyl-L-ornithine from L-glutamate: step 2/4. Functionally, catalyzes the ATP-dependent phosphorylation of N-acetyl-L-glutamate. The sequence is that of Acetylglutamate kinase from Bifidobacterium longum (strain NCC 2705).